Here is a 668-residue protein sequence, read N- to C-terminus: Tyrosine-protein phosphatase non-receptor type ptp-2 (668 aa).

SH2 domains are found at residues 10 to 113 (NFYY…KKPV) and 134 to 232 (WWHG…EEPL). The Tyrosine-protein phosphatase domain occupies 264 to 580 (ISEEFDRLSQ…QFLYKALAFY (317 aa)). C518 acts as the Phosphocysteine intermediate in catalysis. The segment at 603–668 (PRRLRPTPNA…SSTLLKSTKK (66 aa)) is disordered. 2 stretches are compositionally biased toward low complexity: residues 616 to 634 (SSARQVTSSRPSSSASSRT) and 652 to 668 (STSSTSSSSTLLKSTKK).

It belongs to the protein-tyrosine phosphatase family. Non-receptor class 2 subfamily. As to expression, expressed in embryonic cells, developing vulva, body wall muscles, head neurons and gonadal sheath cells.

The protein localises to the cytoplasm. The catalysed reaction is O-phospho-L-tyrosyl-[protein] + H2O = L-tyrosyl-[protein] + phosphate. Functionally, involved in embryonic and larval development. Plays a role in oogenesis by regulating mpk-1 phosphorylation and oocyte maturation in response to major sperm protein (MSP). During the formation of neuromuscular junctions at the larval stage, negatively regulates membrane protrusion from body wall muscles probably downstream of receptor egl-15. Plays a role in fluid homeostasis probably downstream of receptor egl-15 and adapter soc-1. Promotes vulva induction and negatively regulates fertility probably downstream of receptor let-23. Negatively regulates daf-2-mediated repression of dauer formation. The polypeptide is Tyrosine-protein phosphatase non-receptor type ptp-2 (Caenorhabditis elegans).